The primary structure comprises 365 residues: Aspartate-semialdehyde dehydrogenase (365 aa).

NADP(+) is bound by residues Thr-15, Gly-16, Thr-17, Val-18, Ser-40, Ser-43, Leu-89, and Asp-90. Cys-156 acts as the Acyl-thioester intermediate in catalysis. An NADP(+)-binding site is contributed by Gly-188. The active-site Proton acceptor is the His-255. Asn-342 provides a ligand contact to NADP(+).

The protein belongs to the aspartate-semialdehyde dehydrogenase family. Homotetramer; dimer of dimers.

The protein localises to the cytoplasm. The protein resides in the cytosol. It localises to the nucleus. The enzyme catalyses L-aspartate 4-semialdehyde + phosphate + NADP(+) = 4-phospho-L-aspartate + NADPH + H(+). Its pathway is amino-acid biosynthesis; L-methionine biosynthesis via de novo pathway; L-homoserine from L-aspartate: step 2/3. The protein operates within amino-acid biosynthesis; L-threonine biosynthesis; L-threonine from L-aspartate: step 2/5. With respect to regulation, inhibited by the competitive inhibitor 1,4-benzoquinone and derivates such as 2-chloro-3-methoxy-1,4-naphthoquinone, 2,3-dichloro-1,4-naphthoquinone, 2-chloro-1,4-naphthoquinone, 2-bromo-1,4-naphthoquinone and 2,3-dichloro-5,8-dihydroxy-1,4-naphthoquinone. In terms of biological role, catalyzes the NADPH-dependent formation of L-aspartate 4-semialdehyde (L-ASA) by the reductive dephosphorylation of 4-phospho-L-aspartate. Mediates the second step in the biosynthesis of amino acids that derive from aspartate (the aspartate family of amino acids), including methioinine and threonine, the latter of which is a precursor to isoleucine. In Cryptococcus neoformans var. neoformans serotype D (strain JEC21 / ATCC MYA-565) (Filobasidiella neoformans), this protein is Aspartate-semialdehyde dehydrogenase.